The sequence spans 612 residues: Dihydroxy-acid dehydratase (612 aa).

Mg(2+) is bound at residue aspartate 81. [2Fe-2S] cluster is bound at residue cysteine 122. Mg(2+)-binding residues include aspartate 123 and lysine 124. Lysine 124 is modified (N6-carboxylysine). Cysteine 195 contributes to the [2Fe-2S] cluster binding site. A Mg(2+)-binding site is contributed by glutamate 491. The active-site Proton acceptor is the serine 517.

It belongs to the IlvD/Edd family. As to quaternary structure, homodimer. It depends on [2Fe-2S] cluster as a cofactor. The cofactor is Mg(2+).

It catalyses the reaction (2R)-2,3-dihydroxy-3-methylbutanoate = 3-methyl-2-oxobutanoate + H2O. It carries out the reaction (2R,3R)-2,3-dihydroxy-3-methylpentanoate = (S)-3-methyl-2-oxopentanoate + H2O. It participates in amino-acid biosynthesis; L-isoleucine biosynthesis; L-isoleucine from 2-oxobutanoate: step 3/4. Its pathway is amino-acid biosynthesis; L-valine biosynthesis; L-valine from pyruvate: step 3/4. Its function is as follows. Functions in the biosynthesis of branched-chain amino acids. Catalyzes the dehydration of (2R,3R)-2,3-dihydroxy-3-methylpentanoate (2,3-dihydroxy-3-methylvalerate) into 2-oxo-3-methylpentanoate (2-oxo-3-methylvalerate) and of (2R)-2,3-dihydroxy-3-methylbutanoate (2,3-dihydroxyisovalerate) into 2-oxo-3-methylbutanoate (2-oxoisovalerate), the penultimate precursor to L-isoleucine and L-valine, respectively. The polypeptide is Dihydroxy-acid dehydratase (Bartonella henselae (strain ATCC 49882 / DSM 28221 / CCUG 30454 / Houston 1) (Rochalimaea henselae)).